We begin with the raw amino-acid sequence, 777 residues long: Acyl-homoserine lactone acylase PvdQ (777 aa).

Positions 1–25 (MIISRQLPSFCLAALFLSFSGGAHA) are cleaved as a signal peptide. A propeptide spans 196–218 (AGLPAEHWQLAAARQQRFALDRG) (spacer peptide). The Nucleophile role is filled by serine 219.

Belongs to the peptidase S45 family. Heterodimer of an alpha subunit and a beta subunit processed from the same precursor.

The protein localises to the periplasm. The enzyme catalyses an N-acyl-L-homoserine lactone + H2O = L-homoserine lactone + a carboxylate. Its function is as follows. Catalyzes the deacylation of acyl-homoserine lactone (AHL or acyl-HSL), releasing homoserine lactone (HSL) and the corresponding fatty acid. Possesses a specificity for the degradation of long-chain acyl-HSLs (side chains of 11 to 14 carbons in length). This Pseudomonas fluorescens (strain ATCC BAA-477 / NRRL B-23932 / Pf-5) protein is Acyl-homoserine lactone acylase PvdQ (pvdQ).